Here is an 890-residue protein sequence, read N- to C-terminus: DNA mismatch repair protein MutS (890 aa).

646–653 (GPNMAGKS) is a binding site for ATP.

The protein belongs to the DNA mismatch repair MutS family.

Its function is as follows. This protein is involved in the repair of mismatches in DNA. It is possible that it carries out the mismatch recognition step. This protein has a weak ATPase activity. In Hyphomonas neptunium (strain ATCC 15444), this protein is DNA mismatch repair protein MutS.